Reading from the N-terminus, the 587-residue chain is Aspartate--tRNA ligase (587 aa).

Glutamate 173 is a binding site for L-aspartate. The interval 197-200 is aspartate; that stretch reads QTLK. Residue arginine 219 coordinates L-aspartate. ATP contacts are provided by residues 219–221 and glutamine 228; that span reads RDE. Residue histidine 446 participates in L-aspartate binding. ATP is bound at residue glutamate 480. Arginine 487 contacts L-aspartate. Residue 532–535 coordinates ATP; it reads GLDR.

Belongs to the class-II aminoacyl-tRNA synthetase family. Type 1 subfamily. As to quaternary structure, homodimer.

It localises to the cytoplasm. The catalysed reaction is tRNA(Asp) + L-aspartate + ATP = L-aspartyl-tRNA(Asp) + AMP + diphosphate. Catalyzes the attachment of L-aspartate to tRNA(Asp) in a two-step reaction: L-aspartate is first activated by ATP to form Asp-AMP and then transferred to the acceptor end of tRNA(Asp). In Phocaeicola vulgatus (strain ATCC 8482 / DSM 1447 / JCM 5826 / CCUG 4940 / NBRC 14291 / NCTC 11154) (Bacteroides vulgatus), this protein is Aspartate--tRNA ligase.